The sequence spans 248 residues: uncharacterized protein (248 aa).

6 helical membrane passes run isoleucine 65–threonine 85, serine 105–tyrosine 125, isoleucine 126–isoleucine 146, leucine 156–isoleucine 176, leucine 188–serine 208, and valine 222–threonine 242.

It is found in the cell membrane. This is an uncharacterized protein from Rickettsia prowazekii (strain Madrid E).